Consider the following 119-residue polypeptide: Holo-[acyl-carrier-protein] synthase (119 aa).

Mg(2+)-binding residues include Asp-8 and Glu-59.

The protein belongs to the P-Pant transferase superfamily. AcpS family. The cofactor is Mg(2+).

The protein localises to the cytoplasm. It carries out the reaction apo-[ACP] + CoA = holo-[ACP] + adenosine 3',5'-bisphosphate + H(+). Transfers the 4'-phosphopantetheine moiety from coenzyme A to a Ser of acyl-carrier-protein. This is Holo-[acyl-carrier-protein] synthase from Streptococcus agalactiae serotype Ia (strain ATCC 27591 / A909 / CDC SS700).